A 351-amino-acid polypeptide reads, in one-letter code: Thiamine-phosphate synthase (351 aa).

Positions 1 to 129 are unknown; sequence MVEPYSQQKQ…GQACKQMRYR (129 aa). Residues 130–351 are thiamine-phosphate synthase; sequence VYSLETNLMG…SQLNRIKPES (222 aa). Residues 177-181 and N209 each bind 4-amino-2-methyl-5-(diphosphooxymethyl)pyrimidine; that span reads QYRDK. Residues D210 and D229 each coordinate Mg(2+). S248 is a 4-amino-2-methyl-5-(diphosphooxymethyl)pyrimidine binding site. 274–276 is a 2-[(2R,5Z)-2-carboxy-4-methylthiazol-5(2H)-ylidene]ethyl phosphate binding site; that stretch reads TPT. K277 contributes to the 4-amino-2-methyl-5-(diphosphooxymethyl)pyrimidine binding site. A 2-[(2R,5Z)-2-carboxy-4-methylthiazol-5(2H)-ylidene]ethyl phosphate-binding site is contributed by G304.

Belongs to the thiamine-phosphate synthase family. Mg(2+) serves as cofactor.

It catalyses the reaction 2-[(2R,5Z)-2-carboxy-4-methylthiazol-5(2H)-ylidene]ethyl phosphate + 4-amino-2-methyl-5-(diphosphooxymethyl)pyrimidine + 2 H(+) = thiamine phosphate + CO2 + diphosphate. It carries out the reaction 2-(2-carboxy-4-methylthiazol-5-yl)ethyl phosphate + 4-amino-2-methyl-5-(diphosphooxymethyl)pyrimidine + 2 H(+) = thiamine phosphate + CO2 + diphosphate. The catalysed reaction is 4-methyl-5-(2-phosphooxyethyl)-thiazole + 4-amino-2-methyl-5-(diphosphooxymethyl)pyrimidine + H(+) = thiamine phosphate + diphosphate. The protein operates within cofactor biosynthesis; thiamine diphosphate biosynthesis; thiamine phosphate from 4-amino-2-methyl-5-diphosphomethylpyrimidine and 4-methyl-5-(2-phosphoethyl)-thiazole: step 1/1. Its function is as follows. Condenses 4-methyl-5-(beta-hydroxyethyl)thiazole monophosphate (THZ-P) and 2-methyl-4-amino-5-hydroxymethyl pyrimidine pyrophosphate (HMP-PP) to form thiamine monophosphate (TMP). The polypeptide is Thiamine-phosphate synthase (Nostoc sp. (strain PCC 7120 / SAG 25.82 / UTEX 2576)).